The sequence spans 251 residues: MIDAHTHLDVRSFEDLEKMALSGIETIITCAHDPYKMSTPEVYLDHWDRLINLEVKRGEMAGVEVKVAVGVHPMGYPKNWEVLIKKLPEFLDNENVVAIGETGLHYLTEDEKNLLREQLYLAKDYNMPIIIHTPEKNKKEALIEILKILDEVKIKDSLVMIDHINKETVDLIDRDVYVGLTVQPSMKLTHEEAAEIIKNYNKKFILSSDLGSLKADIYALPRTKLYMKNIGVDEEKIIASVYKNAKGFYRL.

H5, H7, E101, H132, H163, and D209 together coordinate a divalent metal cation.

Belongs to the metallo-dependent hydrolases superfamily. TatD-type hydrolase family. Requires a divalent metal cation as cofactor.

This is an uncharacterized protein from Methanocaldococcus jannaschii (strain ATCC 43067 / DSM 2661 / JAL-1 / JCM 10045 / NBRC 100440) (Methanococcus jannaschii).